The following is a 328-amino-acid chain: Alpha-tubulin N-acetyltransferase 2 (328 aa).

The N-acetyltransferase domain occupies 5–185; the sequence is SQVALLPKLS…NNFVVFHRYF (181 aa). Acetyl-CoA is bound by residues 119–132 and 155–164; these read FFVD…GFGK and SVKFLAFLRK. Disordered regions lie at residues 219–261 and 282–328; these read EYQS…PGKK and GGDP…TPEH. Positions 238 to 248 are enriched in pro residues; sequence TPPPPLPPPLV. Residues 312–328 are compositionally biased toward polar residues; sequence PTRSGVQYNIISGTPEH.

This sequence belongs to the acetyltransferase ATAT1 family.

It catalyses the reaction L-lysyl-[alpha-tubulin] + acetyl-CoA = N(6)-acetyl-L-lysyl-[alpha-tubulin] + CoA + H(+). Functionally, specifically acetylates 'Lys-40' in alpha-tubulin on the lumenal side of microtubules. Promotes microtubule destabilization and accelerates microtubule dynamics; this activity may be independent of acetylation activity. Acetylates alpha-tubulin with a slow enzymatic rate, due to a catalytic site that is not optimized for acetyl transfer. Enters the microtubule through each end and diffuses quickly throughout the lumen of microtubules. Acetylates only long/old microtubules because of its slow acetylation rate since it does not have time to act on dynamically unstable microtubules before the enzyme is released. This chain is Alpha-tubulin N-acetyltransferase 2, found in Trypanosoma cruzi (strain CL Brener).